The primary structure comprises 207 residues: uncharacterized protein (207 aa).

Residues arginine 80, glutamate 88, and arginine 148 contribute to the active site.

This sequence belongs to the thermonuclease family.

This is an uncharacterized protein from Methanocaldococcus jannaschii (strain ATCC 43067 / DSM 2661 / JAL-1 / JCM 10045 / NBRC 100440) (Methanococcus jannaschii).